A 335-amino-acid chain; its full sequence is Glyceraldehyde-3-phosphate dehydrogenase 2 (335 aa).

NAD(+)-binding positions include 13-14 (RI), aspartate 34, and methionine 79. D-glyceraldehyde 3-phosphate-binding positions include 151 to 153 (SCT), threonine 182, 211 to 212 (TG), and arginine 234. Cysteine 152 serves as the catalytic Nucleophile. Asparagine 316 contacts NAD(+).

The protein belongs to the glyceraldehyde-3-phosphate dehydrogenase family. As to quaternary structure, homotetramer.

It is found in the cytoplasm. The enzyme catalyses D-glyceraldehyde 3-phosphate + phosphate + NAD(+) = (2R)-3-phospho-glyceroyl phosphate + NADH + H(+). The protein operates within carbohydrate degradation; glycolysis; pyruvate from D-glyceraldehyde 3-phosphate: step 1/5. Its function is as follows. Glyceraldehyde-3-phosphate dehydrogenase is a key enzyme in glycolysis that catalyzes the first step of the pathway by converting D-glyceraldehyde 3-phosphate (G3P) into 3-phospho-D-glyceroyl phosphate. This is Glyceraldehyde-3-phosphate dehydrogenase 2 (gapdh-2) from Danio rerio (Zebrafish).